The sequence spans 1137 residues: Isoleucine--tRNA ligase (1137 aa).

The 'HIGH' region motif lies at 50 to 60; it reads PSANGMPGIHH. The short motif at 688–692 is the 'KMSKS' region element; sequence KMSKR. Lys-691 contacts ATP.

This sequence belongs to the class-I aminoacyl-tRNA synthetase family. IleS type 2 subfamily. As to quaternary structure, monomer. Requires Zn(2+) as cofactor.

Its subcellular location is the cytoplasm. The enzyme catalyses tRNA(Ile) + L-isoleucine + ATP = L-isoleucyl-tRNA(Ile) + AMP + diphosphate. Catalyzes the attachment of isoleucine to tRNA(Ile). As IleRS can inadvertently accommodate and process structurally similar amino acids such as valine, to avoid such errors it has two additional distinct tRNA(Ile)-dependent editing activities. One activity is designated as 'pretransfer' editing and involves the hydrolysis of activated Val-AMP. The other activity is designated 'posttransfer' editing and involves deacylation of mischarged Val-tRNA(Ile). This chain is Isoleucine--tRNA ligase, found in Porphyromonas gingivalis (strain ATCC BAA-308 / W83).